Here is a 293-residue protein sequence, read N- to C-terminus: Pyridoxal 5'-phosphate synthase subunit PdxS (293 aa).

D23 is a binding site for D-ribose 5-phosphate. The Schiff-base intermediate with D-ribose 5-phosphate role is filled by K80. D-ribose 5-phosphate is bound at residue G152. R164 lines the D-glyceraldehyde 3-phosphate pocket. Residues G213 and 234–235 (GS) contribute to the D-ribose 5-phosphate site.

The protein belongs to the PdxS/SNZ family. In terms of assembly, in the presence of PdxT, forms a dodecamer of heterodimers.

It catalyses the reaction aldehydo-D-ribose 5-phosphate + D-glyceraldehyde 3-phosphate + L-glutamine = pyridoxal 5'-phosphate + L-glutamate + phosphate + 3 H2O + H(+). It participates in cofactor biosynthesis; pyridoxal 5'-phosphate biosynthesis. Catalyzes the formation of pyridoxal 5'-phosphate from ribose 5-phosphate (RBP), glyceraldehyde 3-phosphate (G3P) and ammonia. The ammonia is provided by the PdxT subunit. Can also use ribulose 5-phosphate and dihydroxyacetone phosphate as substrates, resulting from enzyme-catalyzed isomerization of RBP and G3P, respectively. The sequence is that of Pyridoxal 5'-phosphate synthase subunit PdxS from Syntrophus aciditrophicus (strain SB).